A 25-amino-acid polypeptide reads, in one-letter code: Chrysophsin-2 (25 aa).

A Histidine amide modification is found at His25.

In terms of tissue distribution, gill.

The protein localises to the secreted. In terms of biological role, has antibacterial activity against Gram-positive bacteria B.subtilis ATCC 6633, L.garvieae ATCC 49156 and S.iniae F-8502, and Gram-negative bacteria E.coli WT-2, V.anguillarum ATCC 19264, V.penaeicida KHA, V.harveyi ATCC 14126, V.vulnificus ATCC 33148 and A.salmonicida NCMB 1102. Has hemolytic activity against human red blood cells. Seems to disrupt the membranes by adopting an alpha helical conformation. May play a significant role in innate host defense. The protein is Chrysophsin-2 of Pagrus major (Red sea bream).